We begin with the raw amino-acid sequence, 150 residues long: Small ribosomal subunit protein eS19 (150 aa).

Belongs to the eukaryotic ribosomal protein eS19 family. Part of the 30S ribosomal subunit.

Its function is as follows. May be involved in maturation of the 30S ribosomal subunit. This chain is Small ribosomal subunit protein eS19, found in Thermoplasma volcanium (strain ATCC 51530 / DSM 4299 / JCM 9571 / NBRC 15438 / GSS1).